Consider the following 551-residue polypeptide: Cleavage and polyadenylation specificity factor subunit 6 (551 aa).

Residues 1–213 are necessary for interaction with NXF1; that stretch reads MADGVDHIDI…RGRFPGAVPG (213 aa). One can recognise an RRM domain in the interval 81–161; the sequence is IALYIGNLTW…QNPVVTPCNK (81 aa). Residues 81–161 form a necessary for interaction with NUDT21/CPSF5 region; the sequence is IALYIGNLTW…QNPVVTPCNK (81 aa). The tract at residues 81–161 is necessary for nuclear paraspeckles localization; that stretch reads IALYIGNLTW…QNPVVTPCNK (81 aa). Thr-157 bears the Phosphothreonine mark. The segment covering 169–180 has biased composition (polar residues); that stretch reads MQSRKTTQSGQM. 2 disordered regions span residues 169 to 411 and 477 to 551; these read MQSR…PLSE and LHGI…YRHR. The GAR motif lies at 202-206; that stretch reads RGRGR. Low complexity predominate over residues 207-219; that stretch reads FPGAVPGGDRFPG. Pro residues-rich tracts occupy residues 220–265, 285–366, and 377–388; these read PAGP…PLAG, GQPP…PPPT, and GPPPTDPYGRPP. Positions 389–404 are enriched in basic and acidic residues; that stretch reads PYDRGDYGPPGREMDT. Residues Thr-404 and Thr-407 each carry the phosphothreonine modification. The segment at 404–551 is sufficient for nuclear speckle localization; the sequence is TARTPLSEAE…RDREREYRHR (148 aa). The interval 405-551 is necessary for RNA-binding; it reads ARTPLSEAEF…RDREREYRHR (147 aa). Residues 481–551 are necessary for interaction with SRSF3, SRSF7 and TRA2B/SFRS10; sequence ESKSYGSGSR…RDREREYRHR (71 aa). Basic and acidic residues predominate over residues 489-503; that stretch reads SRRERSRERDHSRSR. The interval 490 to 551 is arg/Ser-rich domain; that stretch reads RRERSRERDH…RDREREYRHR (62 aa). Residues Ser-494, Ser-500, Ser-511, Ser-513, and Ser-525 each carry the phosphoserine modification. Residues 504–514 are compositionally biased toward basic residues; that stretch reads EKSRRHKSRSR. The interval 510–551 is sufficient for nuclear targeting; that stretch reads KSRSRDRHDDYYRERSRERERHRDRDRDRDRERDREREYRHR. A compositionally biased stretch (basic and acidic residues) spans 515-551; that stretch reads DRHDDYYRERSRERERHRDRDRDRDRERDREREYRHR.

This sequence belongs to the RRM CPSF6/7 family. Component of the cleavage factor Im (CFIm) complex which is a heterotetramer composed of two subunits of NUDT21/CPSF5 and two subunits of CPSF6 or CPSF7 or a heterodimer of CPSF6 and CPSF7. The cleavage factor Im (CFIm) complex associates with the CPSF and CSTF complexes to promote the assembly of the core mRNA 3'-processing machinery. Associates with the exon junction complex (EJC). Associates with the 80S ribosome particle. Interacts (via the RRM domain) with NUDT21/CPSF5; this interaction is direct and enhances binding to RNA. Interacts (via Arg/Ser-rich domain) with FIP1L1 (preferentially via unphosphorylated form and Arg/Glu/Asp-rich domain); this interaction mediates, at least in part, the interaction between the CFIm and CPSF complexes and may be inhibited by CPSF6 hyper-phosphorylation. Interacts (via N-terminus) with NXF1; this interaction is direct. Interacts with SRSF3. Interacts with SRSF7. Interacts with SNRNP70. Interacts with TRA2B/SFRS10. Interacts with UPF1. Interacts with UPF3B. Interacts with VIRMA. Interacts (via Arg/Ser-rich domain) with TNPO3; promoting nuclear import of CPSF6 independently of its phosphorylation status. Interacts with YTHDC1. Phosphorylated. Phosphorylated in the Arg/Ser-rich domain by SRPK1, in vitro. In terms of processing, symmetrically dimethylated on arginine residues in the GAR motif by PRMT5 in a WDR77- and CLNS1A-dependent manner. Asymmetrically dimethylated on arginine residues in the GAR motif by PRMT1.

The protein localises to the nucleus. Its subcellular location is the nucleoplasm. It localises to the nucleus speckle. The protein resides in the cytoplasm. Its function is as follows. Component of the cleavage factor Im (CFIm) complex that functions as an activator of the pre-mRNA 3'-end cleavage and polyadenylation processing required for the maturation of pre-mRNA into functional mRNAs. CFIm contributes to the recruitment of multiprotein complexes on specific sequences on the pre-mRNA 3'-end, so called cleavage and polyadenylation signals (pA signals). Most pre-mRNAs contain multiple pA signals, resulting in alternative cleavage and polyadenylation (APA) producing mRNAs with variable 3'-end formation. The CFIm complex acts as a key regulator of cleavage and polyadenylation site choice during APA through its binding to 5'-UGUA-3' elements localized in the 3'-untranslated region (UTR) for a huge number of pre-mRNAs. CPSF6 enhances NUDT21/CPSF5 binding to 5'-UGUA-3' elements localized upstream of pA signals and promotes RNA looping, and hence activates directly the mRNA 3'-processing machinery. Plays a role in mRNA export. This is Cleavage and polyadenylation specificity factor subunit 6 from Bos taurus (Bovine).